Reading from the N-terminus, the 420-residue chain is Argininosuccinate synthase (420 aa).

ATP contacts are provided by residues 9–17 (AYSGGLDTS) and A35. L-citrulline is bound by residues Y86 and S91. Position 114-122 (114-122 (SHGCTGKGN)) interacts with ATP. 3 residues coordinate L-aspartate: T118, N122, and D123. N122 provides a ligand contact to L-citrulline. R126, S179, S188, E273, and Y285 together coordinate L-citrulline.

Belongs to the argininosuccinate synthase family. Type 1 subfamily. As to quaternary structure, homotetramer.

It is found in the cytoplasm. It catalyses the reaction L-citrulline + L-aspartate + ATP = 2-(N(omega)-L-arginino)succinate + AMP + diphosphate + H(+). It participates in amino-acid biosynthesis; L-arginine biosynthesis; L-arginine from L-ornithine and carbamoyl phosphate: step 2/3. Its function is as follows. Catalyzes the eighth step in arginine biosynthesis. Also has a catabolic function as the first enzyme of citrulline utilization as nitrogen source via arginine and the reactions involved in the arginase pathway. The sequence is that of Argininosuccinate synthase (ARG1) from Saccharomyces cerevisiae (strain ATCC 204508 / S288c) (Baker's yeast).